Reading from the N-terminus, the 89-residue chain is Small ribosomal subunit protein uS15 (89 aa).

Belongs to the universal ribosomal protein uS15 family. As to quaternary structure, part of the 30S ribosomal subunit. Forms a bridge to the 50S subunit in the 70S ribosome, contacting the 23S rRNA.

Its function is as follows. One of the primary rRNA binding proteins, it binds directly to 16S rRNA where it helps nucleate assembly of the platform of the 30S subunit by binding and bridging several RNA helices of the 16S rRNA. In terms of biological role, forms an intersubunit bridge (bridge B4) with the 23S rRNA of the 50S subunit in the ribosome. This chain is Small ribosomal subunit protein uS15, found in Cereibacter sphaeroides (strain ATCC 17023 / DSM 158 / JCM 6121 / CCUG 31486 / LMG 2827 / NBRC 12203 / NCIMB 8253 / ATH 2.4.1.) (Rhodobacter sphaeroides).